A 316-amino-acid chain; its full sequence is Ferrochelatase (316 aa).

His190 and Glu271 together coordinate Fe cation.

This sequence belongs to the ferrochelatase family.

The protein localises to the cytoplasm. It carries out the reaction heme b + 2 H(+) = protoporphyrin IX + Fe(2+). The protein operates within porphyrin-containing compound metabolism; protoheme biosynthesis; protoheme from protoporphyrin-IX: step 1/1. Catalyzes the ferrous insertion into protoporphyrin IX. The protein is Ferrochelatase of Sulfurimonas denitrificans (strain ATCC 33889 / DSM 1251) (Thiomicrospira denitrificans (strain ATCC 33889 / DSM 1251)).